Consider the following 354-residue polypeptide: Serum paraoxonase/lactonase 3 (354 aa).

Cysteines 42 and 352 form a disulfide. Asparagine 50 carries an N-linked (GlcNAc...) asparagine glycan. Ca(2+) is bound by residues glutamate 53 and aspartate 54. Residue histidine 114 is the Proton acceptor of the active site. Isoleucine 116 is a binding site for Ca(2+). Serine 165 is subject to Phosphoserine. Ca(2+)-binding residues include asparagine 167, aspartate 168, asparagine 223, aspartate 268, and asparagine 269. N-linked (GlcNAc...) asparagine glycans are attached at residues asparagine 269 and asparagine 323.

The protein belongs to the paraoxonase family. In terms of assembly, homodimer. Ca(2+) is required as a cofactor. Glycosylated. In terms of processing, the signal sequence is not cleaved.

The protein resides in the secreted. Its subcellular location is the extracellular space. It carries out the reaction a phenyl acetate + H2O = a phenol + acetate + H(+). It catalyses the reaction An aryl dialkyl phosphate + H2O = dialkyl phosphate + an aryl alcohol.. The enzyme catalyses an N-acyl-L-homoserine lactone + H2O = an N-acyl-L-homoserine + H(+). Its function is as follows. Has low activity towards the organophosphate paraxon and aromatic carboxylic acid esters. Rapidly hydrolyzes lactones such as statin prodrugs (e.g. lovastatin). Hydrolyzes aromatic lactones and 5- or 6-member ring lactones with aliphatic substituents but not simple lactones or those with polar substituents. The protein is Serum paraoxonase/lactonase 3 (Pon3) of Mus musculus (Mouse).